A 352-amino-acid chain; its full sequence is Divinyl chlorophyll a/b light-harvesting protein PcbB (352 aa).

The next 6 membrane-spanning stretches (helical) occupy residues 27 to 47 (FIAAHAAHAGLMMFWAGAFTL), 89 to 109 (CTVIAVLHLIFSGVLGAGGIL), 142 to 162 (FILGHHLIFLGLANIQFVEWA), 203 to 223 (VMGGHAFLAFFQIIGGAFHII), 243 to 263 (AVLSYSLAGVGYCALVAAFWS), and 307 to 327 (LANVHFYLGFFFIQGHLWHAL).

This sequence belongs to the PsbB/PsbC family. IsiA/Pcb subfamily. In terms of assembly, the antenna complex consists of divinyl chlorophylls (a and b) and divinyl chlorophyll a/b binding proteins and binds more divinyl chlorophyll b than does the antenna complex from high-light-adapted Prochlorococcus. Divinyl chlorophyll a serves as cofactor. Requires divinyl chlorophyll b as cofactor.

It localises to the cellular thylakoid membrane. Functionally, the antenna complex functions as a light receptor, it captures and delivers excitation energy to photosystems II and I. The Prochlorales pcb genes are not related to higher plant LHCs. The sequence is that of Divinyl chlorophyll a/b light-harvesting protein PcbB (pcbB) from Prochlorococcus marinus (strain NATL2A).